The sequence spans 84 residues: Polyketide-8 synthase acyl carrier protein 1 (84 aa).

Residues 7–82 enclose the Carrier domain; sequence AARKQEIKEI…GVYVVVSEAA (76 aa). Position 42 is an O-(pantetheine 4'-phosphoryl)serine (S42).

In terms of processing, 4'-phosphopantetheine is transferred from CoA to a specific serine of the apo-ACP-like protein.

Acyl carrier protein. This chain is Polyketide-8 synthase acyl carrier protein 1, found in Streptomyces avermitilis (strain ATCC 31267 / DSM 46492 / JCM 5070 / NBRC 14893 / NCIMB 12804 / NRRL 8165 / MA-4680).